The sequence spans 242 residues: Segregation and condensation protein A (242 aa).

The protein belongs to the ScpA family. As to quaternary structure, component of a cohesin-like complex composed of ScpA, ScpB and the Smc homodimer, in which ScpA and ScpB bind to the head domain of Smc. The presence of the three proteins is required for the association of the complex with DNA.

The protein resides in the cytoplasm. Its function is as follows. Participates in chromosomal partition during cell division. May act via the formation of a condensin-like complex containing Smc and ScpB that pull DNA away from mid-cell into both cell halves. This chain is Segregation and condensation protein A, found in Streptococcus pneumoniae serotype 2 (strain D39 / NCTC 7466).